The chain runs to 394 residues: Methane monooxygenase component A beta chain (394 aa).

M.trichosporium has two forms of methane monooxygenase, a soluble and a membrane-bound type. The soluble type consists of four components (A to D): protein A, comprising three chains, in an alpha-2, beta-2, gamma-2 configuration, is a nonheme iron protein containing an unusual mu-hydroxo bridge structure at its active site and interacts with both oxygen and methane.

The enzyme catalyses methane + NADH + O2 + H(+) = methanol + NAD(+) + H2O. It catalyses the reaction methane + NADPH + O2 + H(+) = methanol + NADP(+) + H2O. In terms of biological role, responsible for the initial oxygenation of methane to methanol in methanotrophs. It also catalyzes the monohydroxylation of a variety of unactivated alkenes, alicyclic, aromatic and heterocyclic compounds. This chain is Methane monooxygenase component A beta chain (mmoY), found in Methylosinus trichosporium.